The following is a 199-amino-acid chain: Single-stranded DNA cytosine deaminase (199 aa).

The short motif at 1 to 30 (MDSLLKKQRQFLYQFKNVRWAKGRHETYLC) is the Bipartite nuclear localization signal element. Residues 2 to 26 (DSLLKKQRQFLYQFKNVRWAKGRHE) are interaction with SUPT6H. Residues 23-130 (GRHETYLCYV…KAEPEGLRRL (108 aa)) form the CMP/dCMP-type deaminase domain. The residue at position 27 (T27) is a Phosphothreonine; by PKA. S38 carries the post-translational modification Phosphoserine; by PKA. Residues 39 to 42 (PTSF) form an important for interaction with CTNNBL1 region. H56 lines the Zn(2+) pocket. The Proton donor role is filled by E58. The Zn(2+) site is built by C87 and C90. The tract at residues 88-116 (YDCARHVADFLRGYPNLSLRIFTARLYFC) is required for interaction with RNF126. A Nuclear export signal motif is present at residues 184–199 (LYEVDDLRDAFRTLGL).

It belongs to the cytidine and deoxycytidylate deaminase family. As to quaternary structure, interacts with CTNNBL1; the interaction is important for the immunoglobulin switch activity of AICDA. Interacts (via its NLS) with KPNA1. Interacts with PKA/PRKACA and PRKAR1A/PKR1. Interacts with SUPT6H, TRIM28 and NCL. Directly interacts with MCM3AP; this interaction may favor AICDA recruitment to immunoglobulin variable region genes, hence promoting somatic hypermutations. It depends on Zn(2+) as a cofactor. Post-translationally, ser-38 is the major site whereas Thr-27 is the minor site of phosphorylation. Phosphorylation regulates its class-switch recombination activity. In terms of processing, probably monoubiquitinated on several residues by RNF126. As to expression, expressed in lymph nodes, spleen and thymus.

The protein localises to the nucleus. The protein resides in the cytoplasm. The catalysed reaction is a 2'-deoxycytidine in single-stranded DNA + H2O + H(+) = a 2'-deoxyuridine in single-stranded DNA + NH4(+). Its function is as follows. Single-stranded DNA-specific cytidine deaminase. Involved in somatic hypermutation (SHM), gene conversion, and class-switch recombination (CSR) in B-lymphocytes by deaminating C to U during transcription of Ig-variable (V) and Ig-switch (S) region DNA. Required for several crucial steps of B-cell terminal differentiation necessary for efficient antibody responses. May also play a role in the epigenetic regulation of gene expression by participating in DNA demethylation. This is Single-stranded DNA cytosine deaminase (AICDA) from Bos taurus (Bovine).